Reading from the N-terminus, the 327-residue chain is Serine/threonine-protein phosphatase PP1-beta catalytic subunit (327 aa).

At Ala2 the chain carries N-acetylalanine. Positions 63, 65, 91, and 123 each coordinate Mn(2+). His124 (proton donor) is an active-site residue. Mn(2+) contacts are provided by His172 and His247. Residues 305–327 form a disordered region; it reads QYGGLNSGRPVTPPRTANPPKKR. Thr316 carries the post-translational modification Phosphothreonine.

The protein belongs to the PPP phosphatase family. PP-1 subfamily. PP1 comprises a catalytic subunit, PPP1CA, PPP1CB or PPP1CC, which is folded into its native form by inhibitor 2 and glycogen synthetase kinase 3, and then complexed to one or several targeting or regulatory subunits. The targeting or regulatory subunits determine the substrate specificity of PP1. PPP1R12A, PPP1R12B and PPP1R12C mediate binding to myosin. PPP1R3A (in skeletal muscle), PPP1R3B (in liver), PPP1R3C, PPP1R3D and PPP1R3F (in brain) mediate binding to glycogen. PPP1R15A and PPP1R15B mediate binding to EIF2S1. Part of a complex containing PPP1R15B, PP1 and NCK1/2. Interacts with PPP1R7 and PPP1R12C. Interacts with PPP1R16B. Component of the PTW/PP1 phosphatase complex, composed of PPP1R10/PNUTS, TOX4, WDR82, and PPP1CA or PPP1CB or PPP1CC. Interacts with PPP1R8. Interacts with PPP1R12A and NUAK1; the interaction is direct. Interacts with TRIM28; the interaction is weak. Interacts with FOXP3. Interacts with RRP1B. Interacts with SERPINE1. Interacts with LZTR1. Component of the SHOC2-MRAS-PP1c (SMP) complex consisting of SHOC2, GTP-bound M-Ras/MRAS and the catalytic subunit of protein phosphatase 1 (either PPP1CA, PPP1CB or PPP1CC). SHOC2 and PP1c preferably bind M-Ras/MRAS, but they also bind K-Ras/KRAS, N-Ras/NRAS and H-Ras/HRAS; these interactions are GTP-dependent and both SHOC2 and PP1c are required to form a stable complex. Interacts with SHOC2 in the absence of Ras GTPases. It depends on Mn(2+) as a cofactor.

It localises to the cytoplasm. The protein resides in the nucleus. The protein localises to the nucleoplasm. Its subcellular location is the nucleolus. The catalysed reaction is O-phospho-L-seryl-[protein] + H2O = L-seryl-[protein] + phosphate. The enzyme catalyses O-phospho-L-threonyl-[protein] + H2O = L-threonyl-[protein] + phosphate. It catalyses the reaction O-phospho-L-seryl-[myosin light chain] + H2O = L-seryl-[myosin light chain] + phosphate. It carries out the reaction O-phospho-L-threonyl-[myosin light chain] + H2O = L-threonyl-[myosin light chain] + phosphate. Its activity is regulated as follows. Inhibited by the toxins okadaic acid, tautomycin and microcystin Leu-Arg. The phosphatase activity of the PPP1R15A-PP1 complex toward EIF2S1 is specifically inhibited by Salubrinal, a drug that protects cells from endoplasmic reticulum stress. In terms of biological role, protein phosphatase that associates with over 200 regulatory proteins to form highly specific holoenzymes which dephosphorylate hundreds of biological targets. Protein phosphatase (PP1) is essential for cell division, it participates in the regulation of glycogen metabolism, muscle contractility and protein synthesis. Involved in regulation of ionic conductances and long-term synaptic plasticity. Component of the PTW/PP1 phosphatase complex, which plays a role in the control of chromatin structure and cell cycle progression during the transition from mitosis into interphase. In balance with CSNK1D and CSNK1E, determines the circadian period length, through the regulation of the speed and rhythmicity of PER1 and PER2 phosphorylation. May dephosphorylate CSNK1D and CSNK1E. Core component of the SHOC2-MRAS-PP1c (SMP) holophosphatase complex that regulates the MAPK pathway activation. The SMP complex specifically dephosphorylates the inhibitory phosphorylation at 'Ser-259' of RAF1 kinase, 'Ser-365' of BRAF kinase and 'Ser-214' of ARAF kinase, stimulating their kinase activities. The SMP complex enhances the dephosphorylation activity and substrate specificity of PP1c. The chain is Serine/threonine-protein phosphatase PP1-beta catalytic subunit (PPP1CB) from Bos taurus (Bovine).